Reading from the N-terminus, the 689-residue chain is Collagen alpha-2(IX) chain (689 aa).

The signal sequence occupies residues 1 to 23; the sequence is MAAATASPRSLLVLLQVVVLALA. The tract at residues 26 to 518 is disordered; that stretch reads RGPPGERGPP…QPGRQGVEGR (493 aa). A triple-helical region 4 (COL4) region spans residues 27-163; it reads GPPGERGPPG…PGKPGRPGTI (137 aa). Over residues 31 to 43 the composition is skewed to pro residues; sequence ERGPPGPPGPPGV. Positions 44-56 are enriched in low complexity; that stretch reads PGSDGIDGDNGPP. Composition is skewed to pro residues over residues 106–127 and 144–157; these read LPGPPGLPGPGFAGPPGPPGPV and PDGPSGPPGPPGKP. Position 160 is a 4-hydroxyproline (proline 160). Positions 164–180 are nonhelical region 4 (NC4); that stretch reads QGLEGSADFLCPTNCPP. The O-linked (Xyl...) (glycosaminoglycan) serine glycan is linked to serine 169. A triple-helical region 3 (COL3) region spans residues 181–519; it reads GMKGPPGLQG…PGRQGVEGRD (339 aa). Lysine 183 is subject to 5-hydroxylysine. An O-linked (Gal...) hydroxylysine glycan is attached at lysine 183. The span at 343–352 shows a compositional bias: gly residues; sequence GTKGGPGDQG. 2 stretches are compositionally biased toward low complexity: residues 353–366 and 393–413; these read EPGPQGLPGFSGPP and RGPVGQPGPQGRQGPKGEQGP. The nonhelical region 3 (NC3) stretch occupies residues 520 to 549; sequence ATDQHIVDVALKMLQEQLAEVAVSAKREAL. The tract at residues 550 to 632 is triple-helical region 2 (COL2); it reads GAVGMMGPPG…PGLPGRPGQA (83 aa). Residues 554–663 are disordered; it reads MMGPPGPPGP…LPGPVGLPGF (110 aa). The span at 557–566 shows a compositional bias: pro residues; that stretch reads PPGPPGPPGY. The segment covering 599–611 has biased composition (basic and acidic residues); that stretch reads KRGEKGDPGEVGR. The segment at 633–634 is nonhelical region 2 (NC2); sequence IN. Positions 635–664 are triple-helical region 1 (COL1); the sequence is GKDGDRGSPGAPGEAGRPGLPGPVGLPGFC. The tract at residues 665–689 is nonhelical region 1 (NC1); it reads EPAACLGASAYASARLTEPGSIKGP.

Belongs to the fibril-associated collagens with interrupted helices (FACIT) family. Heterotrimer of an alpha 1(IX), an alpha 2(IX) and an alpha 3(IX) chain. The chains are linked to each other by interchain disulfide bonds. Trimers are also cross-linked via hydroxylysines. Covalently linked to the telopeptides of type II collagen by lysine-derived cross-links. Post-translationally, prolines at the third position of the tripeptide repeating unit (G-X-Y) are hydroxylated in some or all of the chains.

It is found in the secreted. Its subcellular location is the extracellular space. It localises to the extracellular matrix. Functionally, structural component of hyaline cartilage and vitreous of the eye. The polypeptide is Collagen alpha-2(IX) chain (Homo sapiens (Human)).